Consider the following 101-residue polypeptide: MDKSKRTFLKSKRSFRRRLPPIQSGDRIDYKNMSLISRFISEQGKILSRRVNRLTLKQQRLITIAIKQARILSLLPFLNNEKQFERTESTTRTPSLRARKR.

This sequence belongs to the bacterial ribosomal protein bS18 family. In terms of assembly, part of the 30S ribosomal subunit.

The protein resides in the plastid. It is found in the chloroplast. In Lactuca sativa (Garden lettuce), this protein is Small ribosomal subunit protein bS18c.